The chain runs to 501 residues: 2,3-bisphosphoglycerate-independent phosphoglycerate mutase (501 aa).

Mn(2+)-binding residues include D12 and S62. Catalysis depends on S62, which acts as the Phosphoserine intermediate. Residues H121, 150 to 151 (RD), R182, R188, 253 to 256 (RSDR), and K323 contribute to the substrate site. Residues D390, H394, D431, H432, and H450 each coordinate Mn(2+).

It belongs to the BPG-independent phosphoglycerate mutase family. Monomer. It depends on Mn(2+) as a cofactor.

It carries out the reaction (2R)-2-phosphoglycerate = (2R)-3-phosphoglycerate. It participates in carbohydrate degradation; glycolysis; pyruvate from D-glyceraldehyde 3-phosphate: step 3/5. Its function is as follows. Catalyzes the interconversion of 2-phosphoglycerate and 3-phosphoglycerate. The sequence is that of 2,3-bisphosphoglycerate-independent phosphoglycerate mutase from Ehrlichia canis (strain Jake).